The following is a 328-amino-acid chain: UPF0194 membrane protein YE2891 (328 aa).

Residues 1-22 form the signal peptide; that stretch reads MNRKKIIVAVVIVALLAAIGYG. Coiled coils occupy residues 80–109 and 139–208; these read YVNA…REEE and ANKA…TTLL.

This sequence belongs to the UPF0194 family.

The protein resides in the periplasm. This Yersinia enterocolitica serotype O:8 / biotype 1B (strain NCTC 13174 / 8081) protein is UPF0194 membrane protein YE2891.